We begin with the raw amino-acid sequence, 280 residues long: 3-methyl-2-oxobutanoate hydroxymethyltransferase (280 aa).

Mg(2+)-binding residues include aspartate 45 and aspartate 84. 3-methyl-2-oxobutanoate contacts are provided by residues 45-46 (DS), aspartate 84, and lysine 114. Residue glutamate 116 coordinates Mg(2+). The Proton acceptor role is filled by glutamate 183.

It belongs to the PanB family. As to quaternary structure, homodecamer; pentamer of dimers. It depends on Mg(2+) as a cofactor.

The protein resides in the cytoplasm. It carries out the reaction 3-methyl-2-oxobutanoate + (6R)-5,10-methylene-5,6,7,8-tetrahydrofolate + H2O = 2-dehydropantoate + (6S)-5,6,7,8-tetrahydrofolate. It participates in cofactor biosynthesis; (R)-pantothenate biosynthesis; (R)-pantoate from 3-methyl-2-oxobutanoate: step 1/2. Its function is as follows. Catalyzes the reversible reaction in which hydroxymethyl group from 5,10-methylenetetrahydrofolate is transferred onto alpha-ketoisovalerate to form ketopantoate. The sequence is that of 3-methyl-2-oxobutanoate hydroxymethyltransferase from Clostridium kluyveri (strain ATCC 8527 / DSM 555 / NBRC 12016 / NCIMB 10680 / K1).